Reading from the N-terminus, the 277-residue chain is Ribonuclease HII (277 aa).

The tract at residues 1–32 (MIRNQANKPGRAKAATAARKSPLTKSAAKPAA) is disordered. Residues 20–32 (KSPLTKSAAKPAA) are compositionally biased toward low complexity. In terms of domain architecture, RNase H type-2 spans 64 to 252 (WPVAGCDEAG…VVAARRKHQP (189 aa)). Residues D70, E71, and D161 each coordinate a divalent metal cation.

This sequence belongs to the RNase HII family. Mn(2+) is required as a cofactor. It depends on Mg(2+) as a cofactor.

It localises to the cytoplasm. The enzyme catalyses Endonucleolytic cleavage to 5'-phosphomonoester.. Endonuclease that specifically degrades the RNA of RNA-DNA hybrids. The chain is Ribonuclease HII from Bradyrhizobium sp. (strain ORS 278).